The chain runs to 370 residues: Phospho-N-acetylmuramoyl-pentapeptide-transferase (370 aa).

11 helical membrane-spanning segments follow: residues 15-35 (PLEG…AAFA), 44-64 (LLSL…WWGV), 93-113 (MGGL…SWSG), 115-135 (AAEQ…VGGI), 155-175 (LLLQ…RGWI), 183-203 (FDIN…VFLA), 213-233 (GLDG…ALQL), 240-260 (GDPS…GFLV), 268-288 (VFMG…VALL), 296-316 (LIMG…VWVF), and 347-367 (QLVV…GIFF).

Belongs to the glycosyltransferase 4 family. MraY subfamily. Requires Mg(2+) as cofactor.

It localises to the cell inner membrane. The enzyme catalyses UDP-N-acetyl-alpha-D-muramoyl-L-alanyl-gamma-D-glutamyl-meso-2,6-diaminopimeloyl-D-alanyl-D-alanine + di-trans,octa-cis-undecaprenyl phosphate = di-trans,octa-cis-undecaprenyl diphospho-N-acetyl-alpha-D-muramoyl-L-alanyl-D-glutamyl-meso-2,6-diaminopimeloyl-D-alanyl-D-alanine + UMP. Its pathway is cell wall biogenesis; peptidoglycan biosynthesis. In terms of biological role, catalyzes the initial step of the lipid cycle reactions in the biosynthesis of the cell wall peptidoglycan: transfers peptidoglycan precursor phospho-MurNAc-pentapeptide from UDP-MurNAc-pentapeptide onto the lipid carrier undecaprenyl phosphate, yielding undecaprenyl-pyrophosphoryl-MurNAc-pentapeptide, known as lipid I. In Synechococcus sp. (strain CC9311), this protein is Phospho-N-acetylmuramoyl-pentapeptide-transferase.